The sequence spans 276 residues: Eukaryotic translation initiation factor 3 subunit G (276 aa).

Residue Ser148 is modified to Phosphoserine. Positions 195-274 (TTLKISQLNS…LILHLEWSKK (80 aa)) constitute an RRM domain.

This sequence belongs to the eIF-3 subunit G family. Component of the eukaryotic translation initiation factor 3 (eIF-3) complex.

The protein resides in the cytoplasm. In terms of biological role, RNA-binding component of the eukaryotic translation initiation factor 3 (eIF-3) complex, which is involved in protein synthesis of a specialized repertoire of mRNAs and, together with other initiation factors, stimulates binding of mRNA and methionyl-tRNAi to the 40S ribosome. The eIF-3 complex specifically targets and initiates translation of a subset of mRNAs involved in cell proliferation. This subunit can bind 18S rRNA. This is Eukaryotic translation initiation factor 3 subunit G from Debaryomyces hansenii (strain ATCC 36239 / CBS 767 / BCRC 21394 / JCM 1990 / NBRC 0083 / IGC 2968) (Yeast).